A 195-amino-acid polypeptide reads, in one-letter code: Erythropoietin (195 aa).

The first 28 residues, 1-28 (MGVRGRLALLPLALLCLLVLALGLPVLG), serve as a signal peptide directing secretion. 2 cysteine pairs are disulfide-bonded: Cys-35–Cys-190 and Cys-57–Cys-61. Asn-52 is a glycosylation site (N-linked (GlcNAc...) asparagine). N-linked (GlcNAc...) asparagine glycosylation is found at Asn-66 and Asn-111.

This sequence belongs to the EPO/TPO family.

Its subcellular location is the secreted. Hormone involved in the regulation of erythrocyte proliferation and differentiation and the maintenance of a physiological level of circulating erythrocyte mass. Binds to EPOR leading to EPOR dimerization and JAK2 activation thereby activating specific downstream effectors, including STAT1 and STAT3. The protein is Erythropoietin (EPO) of Oryctolagus cuniculus (Rabbit).